The primary structure comprises 239 residues: Small ribosomal subunit protein uS3 (239 aa).

Residues valine 39 to arginine 107 enclose the KH type-2 domain. A disordered region spans residues glycine 214–arginine 239. Residues glutamate 216–arginine 239 are compositionally biased toward basic and acidic residues.

It belongs to the universal ribosomal protein uS3 family. Part of the 30S ribosomal subunit. Forms a tight complex with proteins S10 and S14.

In terms of biological role, binds the lower part of the 30S subunit head. Binds mRNA in the 70S ribosome, positioning it for translation. This Xylella fastidiosa (strain M12) protein is Small ribosomal subunit protein uS3.